Reading from the N-terminus, the 423-residue chain is Lipoamide acyltransferase component of branched-chain alpha-keto acid dehydrogenase complex (423 aa).

The Lipoyl-binding domain occupies 3–78 (THVIKMPDIG…AVGSELIRIE (76 aa)). An N6-lipoyllysine modification is found at Lys44. The 38-residue stretch at 137-174 (LASPAVRKRALDAGIELRYVHGSGPAGRILHEDLDAFM) folds into the Peripheral subunit-binding (PSBD) domain. Catalysis depends on residues His395 and Asp399.

The protein belongs to the 2-oxoacid dehydrogenase family. In terms of assembly, forms a 24-polypeptide structural core with octahedral symmetry. Requires (R)-lipoate as cofactor.

It carries out the reaction N(6)-[(R)-dihydrolipoyl]-L-lysyl-[protein] + 2-methylpropanoyl-CoA = N(6)-[(R)-S(8)-2-methylpropanoyldihydrolipoyl]-L-lysyl-[protein] + CoA. Its function is as follows. The branched-chain alpha-keto dehydrogenase complex catalyzes the overall conversion of alpha-keto acids to acyl-CoA and CO(2). It contains multiple copies of three enzymatic components: branched-chain alpha-keto acid decarboxylase (E1), lipoamide acyltransferase (E2) and lipoamide dehydrogenase (E3). The sequence is that of Lipoamide acyltransferase component of branched-chain alpha-keto acid dehydrogenase complex (bkdB) from Pseudomonas putida (Arthrobacter siderocapsulatus).